Consider the following 999-residue polypeptide: Desmoglein-3 (999 aa).

A signal peptide spans 1–23 (MMGLFPRTTGALAIFVVVILVHG). A propeptide spanning residues 24 to 49 (ELRIETKGQYDEEEMTMQQAKRRQKR) is cleaved from the precursor. 4 consecutive Cadherin domains span residues 50–158 (EWVK…PVFS), 159–268 (QQIF…PMFR), 269–383 (DSQY…GIAF), and 386–499 (ASKT…VLEK). Residues 50–615 (EWVKFAKPCR…TRYGRPHSGR (566 aa)) are Extracellular-facing. N-linked (GlcNAc...) asparagine glycosylation is found at Asn-110 and Asn-180. N-linked (GlcNAc...) asparagine glycosylation is found at Asn-459 and Asn-545. Residues 616 to 640 (LGPAAIGLLLLGLLLLLLAPLLLLT) traverse the membrane as a helical segment. At 641–999 (CDCGAGSTGG…CTEDPCSRLI (359 aa)) the chain is on the cytoplasmic side. The tract at residues 642-714 (DCGAGSTGGV…NTYARGTAVE (73 aa)) is required for interaction with CTNND1 and localization at cell-cell junctions. Desmoglein repeat repeat units follow at residues 910 to 935 (LSTSGSVQPAVSIPDPLQHGNYLVTE) and 936 to 966 (TYSASGSLVQPSTAGFDPLLTQNVIVTERVI).

Homodimer. Part of a complex that contains DSG3, PKP1, YAP1 and YWHAG; the complex is required for localization of DSG3 and YAP1 to the cell membrane in keratinocytes. Interacts with PKP2. Interacts with CTNND1; the interaction facilitates DSG3 localization and retention at cell-cell junctions. Interacts with CDH1; the interaction is required for CDH1 localization to developing adherens junctions. Interacts with RAC1; the interaction is required for DSG3 translocation to cell-cell junctions, organization of cortical F-actin bundles and actin anchoring at cell-cell junctions. Interacts with DSC3; the interaction may limit the interaction of DSC3 with p38MAPK family members and therefore repress p38MAPK signaling activation. In terms of tissue distribution, expressed throughout the basal and spinous layer of the epidermis with weak expression in the granular layer (at protein level). Expressed in skin and mucosa (at protein level). Expressed in the basal layer of the outer root sheath of the telogen hair club, specifically at the cell membrane between the apex of the cells and the surrounding hair club (at protein level). Expression is less abundant between the lateral margins of the outer root sheath basal cells (at protein level). Also expressed in the tongue, tonsil and esophagus.

Its subcellular location is the cell membrane. It localises to the cell junction. It is found in the desmosome. The protein resides in the cytoplasm. The protein localises to the tight junction. Functionally, a component of desmosome cell-cell junctions which are required for positive regulation of cellular adhesion. Required for adherens and desmosome junction assembly in response to mechanical force in keratinocytes. Required for desmosome-mediated cell-cell adhesion of cells surrounding the telogen hair club and the basal layer of the outer root sheath epithelium, consequently is essential for the anchoring of telogen hairs in the hair follicle. Required for the maintenance of the epithelial barrier via promoting desmosome-mediated intercellular attachment of suprabasal epithelium to basal cells. May play a role in the protein stability of the desmosome plaque components DSP, JUP, PKP1, PKP2 and PKP3. Required for YAP1 localization at the plasma membrane in keratinocytes in response to mechanical strain, via the formation of an interaction complex composed of DSG3, PKP1 and YWHAG. May also be involved in the positive regulation of YAP1 target gene transcription and as a result cell proliferation. Positively regulates cellular contractility and cell junction formation via organization of cortical F-actin bundles and anchoring of actin to tight junctions, in conjunction with RAC1. The cytoplasmic pool of DSG3 is required for the localization of CDH1 and CTNNB1 at developing adherens junctions, potentially via modulation of SRC activity. Inhibits keratinocyte migration via suppression of p38MAPK signaling, may therefore play a role in moderating wound healing. The polypeptide is Desmoglein-3 (Homo sapiens (Human)).